The sequence spans 452 residues: 2-succinylbenzoate--CoA ligase (452 aa).

It belongs to the ATP-dependent AMP-binding enzyme family. MenE subfamily.

It carries out the reaction 2-succinylbenzoate + ATP + CoA = 2-succinylbenzoyl-CoA + AMP + diphosphate. Its pathway is quinol/quinone metabolism; 1,4-dihydroxy-2-naphthoate biosynthesis; 1,4-dihydroxy-2-naphthoate from chorismate: step 5/7. The protein operates within quinol/quinone metabolism; menaquinone biosynthesis. In terms of biological role, converts 2-succinylbenzoate (OSB) to 2-succinylbenzoyl-CoA (OSB-CoA). The protein is 2-succinylbenzoate--CoA ligase of Haemophilus influenzae (strain ATCC 51907 / DSM 11121 / KW20 / Rd).